A 459-amino-acid polypeptide reads, in one-letter code: mRNA-capping enzyme subunit alpha (459 aa).

The N6-GMP-lysine intermediate role is filled by lysine 70. The interval 415-459 is disordered; the sequence is MAGGSGRPLPSQSQNATLSTSKPVHSQPPSNDKEPKYVDEDDWSD. Polar residues predominate over residues 424-444; that stretch reads PSQSQNATLSTSKPVHSQPPS.

Belongs to the eukaryotic GTase family. As to quaternary structure, heterodimer. The mRNA-capping enzyme is composed of two separate chains alpha and beta, respectively a mRNA guanylyltransferase and an mRNA 5'-triphosphate monophosphatase.

Its subcellular location is the nucleus. The catalysed reaction is a 5'-end diphospho-ribonucleoside in mRNA + GTP + H(+) = a 5'-end (5'-triphosphoguanosine)-ribonucleoside in mRNA + diphosphate. In terms of biological role, second step of mRNA capping. Transfer of the GMP moiety of GTP to the 5'-diphosphate terminus of RNA via a covalent enzyme-GMP reaction intermediate. The chain is mRNA-capping enzyme subunit alpha (CEG1) from Saccharomyces cerevisiae (strain ATCC 204508 / S288c) (Baker's yeast).